The primary structure comprises 248 residues: Putative insertion sequence ATP-binding protein y4uH (248 aa).

106–113 (GPTGIGKS) is an ATP binding site.

It belongs to the IS21/IS1162 putative ATP-binding protein family.

This Sinorhizobium fredii (strain NBRC 101917 / NGR234) protein is Putative insertion sequence ATP-binding protein y4uH.